We begin with the raw amino-acid sequence, 85 residues long: Large ribosomal subunit protein bL31B (85 aa).

Belongs to the bacterial ribosomal protein bL31 family. Type B subfamily. As to quaternary structure, part of the 50S ribosomal subunit.

This is Large ribosomal subunit protein bL31B from Porphyromonas gingivalis (strain ATCC 33277 / DSM 20709 / CIP 103683 / JCM 12257 / NCTC 11834 / 2561).